We begin with the raw amino-acid sequence, 391 residues long: Mycofactocin maturase MftC (391 aa).

One can recognise a Radical SAM core domain in the interval leucine 16 to serine 232. Positions 30, 34, 37, 251, 258, 269, 310, 313, 319, 323, and 341 each coordinate [4Fe-4S] cluster. A disordered region spans residues glutamate 340–valine 391. Basic and acidic residues predominate over residues leucine 350–serine 364.

It belongs to the radical SAM superfamily. [4Fe-4S] cluster is required as a cofactor.

The enzyme catalyses [mycofactocin precursor peptide]-C-terminal glycyl-L-valyl-L-tyrosine + S-adenosyl-L-methionine = [mycofactocin precursor peptide]-C-terminal glycyl-N-{[2-(4-hydroxyphenyl)ethenyl]-3-methylbutanamide} + 5'-deoxyadenosine + L-methionine + CO2. The catalysed reaction is [mycofactocin precursor peptide]-C-terminal glycyl-N-{[2-(4-hydroxyphenyl)ethenyl]-3-methylbutanamide} + AH2 + S-adenosyl-L-methionine = [mycofactocin precursor peptide]-C-terminal glycyl-N-{5-[(4-hydroxyphenyl)methyl]-4,4-dimethyl-2-oxopyrrolidin-3-yl}acetamide + 5'-deoxyadenosine + L-methionine + A + H(+). Its function is as follows. Radical S-adenosylmethionine (SAM) enzyme responsible for the first step of the biosynthesis of the enzyme cofactor mycofactocin (MFT). Catalyzes two reactions at the C-terminus of the mycofactocin precursor (the MftA peptide). The first one is the oxidative decarboxylation of the C-terminal L-tyrosine of MftA, forming an unsaturated tyramine moiety. The second reaction is the cross-linking of the tyramine with the penultimate L-valine residue, forming a five-membered lactam ring. Its activity requires the presence of the MftB chaperone. This chain is Mycofactocin maturase MftC (mftC), found in Mycobacterium tuberculosis (strain CDC 1551 / Oshkosh).